The sequence spans 76 residues: Heat shock factor-binding protein 1 (76 aa).

It belongs to the HSBP1 family. As to quaternary structure, homohexamer. Associates with heptad repeats of HSF1 trimers and probably also HSF1 monomers, and with HSP70. Association with HSF1 trimers and HSP70 coincides with attenuation of heat shock response and the conversion of HSF1 trimer to monomer.

Its subcellular location is the nucleus. Negative regulator of the heat shock response. Negatively affects HSF1 DNA-binding activity. May have a role in the suppression of the activation of the stress response during the aging process. The chain is Heat shock factor-binding protein 1 (HSBP1) from Bos taurus (Bovine).